We begin with the raw amino-acid sequence, 419 residues long: Farnesyl pyrophosphate synthase (419 aa).

The residue at position 1 (M1) is an N-acetylmethionine. Residues K123, R126, and Q162 each coordinate isopentenyl diphosphate. The residue at position 123 (K123) is an N6-(2-hydroxyisobutyryl)lysine; alternate. K123 is modified (N6-acetyllysine; alternate). The Mg(2+) site is built by D169 and D173. R178 contributes to the dimethylallyl diphosphate binding site. R179 provides a ligand contact to isopentenyl diphosphate. K266, T267, Q306, K323, and K332 together coordinate dimethylallyl diphosphate. At K353 the chain carries N6-acetyllysine.

It belongs to the FPP/GGPP synthase family. Homodimer. Interacts with RSAD2. As to quaternary structure, (Microbial infection) Interacts with HTLV-1 protein p13(II). It depends on Mg(2+) as a cofactor.

The protein localises to the cytoplasm. It catalyses the reaction isopentenyl diphosphate + dimethylallyl diphosphate = (2E)-geranyl diphosphate + diphosphate. The enzyme catalyses isopentenyl diphosphate + (2E)-geranyl diphosphate = (2E,6E)-farnesyl diphosphate + diphosphate. It functions in the pathway isoprenoid biosynthesis; farnesyl diphosphate biosynthesis; farnesyl diphosphate from geranyl diphosphate and isopentenyl diphosphate: step 1/1. The protein operates within isoprenoid biosynthesis; geranyl diphosphate biosynthesis; geranyl diphosphate from dimethylallyl diphosphate and isopentenyl diphosphate: step 1/1. Inactivated by interferon-induced RSAD2. This inactivation may result of disruption of lipid rafts at the plasma membrane, and thus have an antiviral effect since many enveloped viruses need lipid rafts to bud efficiently out of the cell. Its function is as follows. Key enzyme in isoprenoid biosynthesis which catalyzes the formation of farnesyl diphosphate (FPP), a precursor for several classes of essential metabolites including sterols, dolichols, carotenoids, and ubiquinones. FPP also serves as substrate for protein farnesylation and geranylgeranylation. Catalyzes the sequential condensation of isopentenyl pyrophosphate with the allylic pyrophosphates, dimethylallyl pyrophosphate, and then with the resultant geranylpyrophosphate to the ultimate product farnesyl pyrophosphate. The protein is Farnesyl pyrophosphate synthase of Homo sapiens (Human).